Here is a 129-residue protein sequence, read N- to C-terminus: Lysozyme C (129 aa).

The region spanning 1–129 (KIYKRCELAA…VSTWIKDCKL (129 aa)) is the C-type lysozyme domain. 4 disulfide bridges follow: Cys-6–Cys-127, Cys-30–Cys-115, Cys-64–Cys-80, and Cys-76–Cys-94. Active-site residues include Glu-35 and Asp-52.

The protein belongs to the glycosyl hydrolase 22 family. As to quaternary structure, monomer.

It localises to the secreted. The enzyme catalyses Hydrolysis of (1-&gt;4)-beta-linkages between N-acetylmuramic acid and N-acetyl-D-glucosamine residues in a peptidoglycan and between N-acetyl-D-glucosamine residues in chitodextrins.. In terms of biological role, lysozymes have primarily a bacteriolytic function; those in tissues and body fluids are associated with the monocyte-macrophage system and enhance the activity of immunoagents. In Ortalis vetula (Plain chachalaca), this protein is Lysozyme C (LYZ).